The sequence spans 392 residues: Early estrogen-induced gene 1 protein (392 aa).

The C2 NT-type domain maps to 2–145; the sequence is AFLMKKKKFK…ILKVTIGMFL (144 aa). The required for interaction with TNFRSF11A/RANK stretch occupies residues 129-138; the sequence is NTRQDNSILK. The disordered stretch occupies residues 173 to 324; sequence LTCKGGGTSS…RKKDSVESHP (152 aa). Low complexity predominate over residues 183 to 194; the sequence is GGSSSTNSLTGS. The segment covering 228–255 has biased composition (polar residues); sequence SRNSSYASQQSKLSGYSTEHSRSSSLSD. Residues 262 to 273 show a composition bias toward low complexity; it reads TSTSSSASGGLS. Composition is skewed to basic and acidic residues over residues 281-300 and 307-324; these read GMEREHRPSEKPPRPPEKPP and HLSDRSFRRKKDSVESHP.

Belongs to the EEIG family. As to quaternary structure, part of a complex composed of EEIG1, TNFRSF11A/RANK, PLCG2, GAB2, TEC and BTK; complex formation increases in the presence of TNFSF11/RANKL. Interacts with PRDM1/BLIMP1; following TNFSF11/RANKL stimulation in bone marrow-derived macrophages, the interaction promotes the binding of PRDM1/BLIMP1 to the gene promoter of IRF8. Interacts (via N-terminus) with TNFRSF11A/RANK (via cytoplasmic domain); when in the presence of TNFSF11/RANKL. Expressed during TNFSF11/RANKL-induced differentiation of bone marrow-derived macrophages to osteoclasts.

It localises to the nucleus. Its subcellular location is the cytoplasm. The protein resides in the membrane raft. Its function is as follows. Key component of TNFSF11/RANKL- and TNF-induced osteoclastogenesis pathways, thereby mediates bone resorption in pathological bone loss conditions. Required for TNFSF11/RANKL-induced osteoclastogenesis via its interaction with TNFRSF11A/RANK, thereby facilitates the downsteam transcription of NFATC1 and activation of PLCG2. Facilitates recruitment of the transcriptional repressor PRDM1/BLIMP1 to the promoter of the anti-osteoclastogenesis gene IRF8, thereby resulting in transcription of osteoclast differentiation factors. May play a role in estrogen action. The chain is Early estrogen-induced gene 1 protein (Eeig1) from Mus musculus (Mouse).